An 827-amino-acid chain; its full sequence is Villin-1 (827 aa).

The necessary for homodimerization stretch occupies residues 1-126 (MTKLNAQVKG…IRKGGVASGM (126 aa)). Residues 1-734 (MTKLNAQVKG…YDDLKAELGN (734 aa)) form a core region. The stretch at 27–76 (MQMVPVPSSTFGSFFDGDCYVVLAIHKTSSTLSYDIHYWIGQDSSQDEQG) is one Gelsolin-like 1 repeat. LPA/PIP2-binding site regions lie at residues 112–119 (KQGLVIRK) and 138–146 (RLLHVKGKR). Gelsolin-like repeat units lie at residues 148 to 188 (VLAG…MERL) and 265 to 309 (LVVR…QERS). Ser366 is modified (phosphoserine). Gelsolin-like repeat units lie at residues 407–457 (DLEL…DEIA), 528–568 (TKAF…DERE), and 631–672 (FLAT…EEKK). Phosphoserine is present on residues Ser735 and Ser776. Positions 735–827 (SGDWSQIADE…QNIKKEKGLF (93 aa)) are headpiece. The HP domain occupies 761 to 827 (SGPLPTFPLE…QNIKKEKGLF (67 aa)). Residues 816–824 (KQQNIKKEK) are LPA/PIP2-binding site 3.

The protein belongs to the villin/gelsolin family. In terms of assembly, monomer. Homodimer; homodimerization is necessary for actin-bundling. Associates with F-actin; phosphorylation at tyrosine residues decreases the association with F-actin. Interacts (phosphorylated at C-terminus tyrosine phosphorylation sites) with PLCG1 (via the SH2 domains). Interacts (phosphorylated form) with PLCG1; the interaction is enhanced by hepatocyte growth factor (HGF). Post-translationally, phosphorylated on tyrosine residues by SRC. The unphosphorylated form increases the initial rate of actin-nucleating activity, whereas the tyrosine phosphorylated form inhibits actin-nucleating activity, enhances actin-bundling activity and enhances actin-severing activity by reducing high Ca(2+) requirements. The tyrosine phosphorylated form does not regulate actin-capping activity. Tyrosine phosphorylation is essential for cell migration: tyrosine phosphorylation sites in the N-terminus half regulate actin reorganization and cell morphology, whereas tyrosine phosphorylation sites in the C-terminus half regulate cell migration via interaction with PLCG1. Tyrosine phosphorylation is induced by epidermal growth factor (EGF) and stimulates cell migration. As to expression, expressed in small intestin, colon, kidney and enterocytes (at protein level).

It is found in the cytoplasm. The protein resides in the cytoskeleton. It localises to the cell projection. The protein localises to the microvillus. Its subcellular location is the lamellipodium. It is found in the ruffle. The protein resides in the filopodium tip. It localises to the filopodium. Epithelial cell-specific Ca(2+)-regulated actin-modifying protein that modulates the reorganization of microvillar actin filaments. Plays a role in the actin nucleation, actin filament bundle assembly, actin filament capping and severing. Binds phosphatidylinositol 4,5-bisphosphate (PIP2) and lysophosphatidic acid (LPA); binds LPA with higher affinity than PIP2. Binding to LPA increases its phosphorylation by SRC and inhibits all actin-modifying activities. Binding to PIP2 inhibits actin-capping and -severing activities but enhances actin-bundling activity. Regulates the intestinal epithelial cell morphology, cell invasion, cell migration and apoptosis. Protects against apoptosis induced by dextran sodium sulfate (DSS) in the gastrointestinal epithelium. Appears to regulate cell death by maintaining mitochondrial integrity. Enhances hepatocyte growth factor (HGF)-induced epithelial cell motility, chemotaxis and wound repair. Upon S.flexneri cell infection, its actin-severing activity enhances actin-based motility of the bacteria and plays a role during the dissemination. The polypeptide is Villin-1 (Vil1) (Mus musculus (Mouse)).